The chain runs to 312 residues: MPINIPDDLPAYKVLTAENIFVMNQTRATTQRIRPLKILIVNIMPLKITTETQLLRLLSNTPLQLEVELIHMSTHDSKNVPKEHLLTFYKTFKDIKENSYDGMIITGAPVEQMPFEEVDYWNELSEIFEWAKTHVFSSFFICWASQAALHYYYDIDKYLLKHKLTGVYRHHTNQRKMRRKILRGFDYQFYAPHSRYTTVLKEDISSNPNLDILAESDDAGVYLVASKDGSQFFVTGHPEYDPDTLDKEYKRDKEKPGVIAELPKNYYLDDDPSQEIQVKWRSHAYLLFSNWLNYYVYQETPYDLSDLHERKK.

Residue C142 is the Acyl-thioester intermediate of the active site. Positions 163 and 194 each coordinate substrate. The active-site Proton acceptor is the H237. E239 is a catalytic residue. R251 serves as a coordination point for substrate.

This sequence belongs to the MetA family.

Its subcellular location is the cytoplasm. It catalyses the reaction L-homoserine + acetyl-CoA = O-acetyl-L-homoserine + CoA. Its pathway is amino-acid biosynthesis; L-methionine biosynthesis via de novo pathway; O-acetyl-L-homoserine from L-homoserine: step 1/1. In terms of biological role, transfers an acetyl group from acetyl-CoA to L-homoserine, forming acetyl-L-homoserine. The protein is Homoserine O-acetyltransferase of Catenibacterium mitsuokai (strain DSM 15897 / JCM 10609 / CCUG 48821 A / CIP 106738 / RCA14-39).